Consider the following 341-residue polypeptide: Peptidoglycan recognition protein 3 (341 aa).

The first 17 residues, 1-17 (MGTLPWLLAFFILGLQA), serve as a signal peptide directing secretion. N-acetylmuramoyl-L-alanine amidase domains are found at residues 77-179 (TIGW…KVCP) and 200-325 (PAKY…ILSP). N-linked (GlcNAc...) asparagine glycosylation occurs at asparagine 113. 3 disulfides stabilise this stretch: cysteine 178/cysteine 300, cysteine 194/cysteine 238, and cysteine 214/cysteine 220. Histidine 231, arginine 235, and tyrosine 242 together coordinate peptidoglycan. The interaction with murein stretch occupies residues 264–269 (HTYGFN).

This sequence belongs to the N-acetylmuramoyl-L-alanine amidase 2 family. In terms of assembly, monomer. Homodimer; disulfide-linked. Heterodimer with PGLYRP4; disulfide-linked. In terms of processing, N-glycosylated. In terms of tissue distribution, detected in skin epidermis, eccrine sweat glands and ducts, ciliary body epithelial cells of the eye, in small intestine, colon, stomach and in mature epithelial cells of the tongue (at protein level). Highly expressed in skin and esophagus, expressed also in tonsils and thymus and to a much lesser extent in the stomach, descending colon, rectum and brain.

The protein localises to the secreted. Functionally, pattern receptor that binds to murein peptidoglycans (PGN) of Gram-positive bacteria. Has bactericidal activity towards Gram-positive bacteria. May kill Gram-positive bacteria by interfering with peptidoglycan biosynthesis. Also binds to Gram-negative bacteria, and has bacteriostatic activity towards Gram-negative bacteria. Plays a role in innate immunity. The protein is Peptidoglycan recognition protein 3 (PGLYRP3) of Homo sapiens (Human).